The following is a 273-amino-acid chain: 4-hydroxy-tetrahydrodipicolinate reductase (273 aa).

Residues 12 to 17 and Glu38 each bind NAD(+); that span reads GAGGRM. Arg39 contacts NADP(+). NAD(+) is bound by residues 102–104 and 126–129; these read GTT and AANF. His159 acts as the Proton donor/acceptor in catalysis. Position 160 (His160) interacts with (S)-2,3,4,5-tetrahydrodipicolinate. Lys163 functions as the Proton donor in the catalytic mechanism. Residue 169–170 coordinates (S)-2,3,4,5-tetrahydrodipicolinate; sequence GT.

Belongs to the DapB family. Homotetramer.

Its subcellular location is the cytoplasm. It catalyses the reaction (S)-2,3,4,5-tetrahydrodipicolinate + NAD(+) + H2O = (2S,4S)-4-hydroxy-2,3,4,5-tetrahydrodipicolinate + NADH + H(+). The enzyme catalyses (S)-2,3,4,5-tetrahydrodipicolinate + NADP(+) + H2O = (2S,4S)-4-hydroxy-2,3,4,5-tetrahydrodipicolinate + NADPH + H(+). Its pathway is amino-acid biosynthesis; L-lysine biosynthesis via DAP pathway; (S)-tetrahydrodipicolinate from L-aspartate: step 4/4. In terms of biological role, catalyzes the conversion of 4-hydroxy-tetrahydrodipicolinate (HTPA) to tetrahydrodipicolinate. This chain is 4-hydroxy-tetrahydrodipicolinate reductase, found in Pectobacterium atrosepticum (strain SCRI 1043 / ATCC BAA-672) (Erwinia carotovora subsp. atroseptica).